Reading from the N-terminus, the 591-residue chain is L-fucose isomerase (591 aa).

Catalysis depends on proton acceptor residues E337 and D361. Positions 337, 361, and 528 each coordinate Mn(2+).

The protein belongs to the L-fucose isomerase family. In terms of assembly, homohexamer. It depends on Mn(2+) as a cofactor.

The protein resides in the cytoplasm. The enzyme catalyses L-fucose = L-fuculose. It participates in carbohydrate degradation; L-fucose degradation; L-lactaldehyde and glycerone phosphate from L-fucose: step 1/3. Its function is as follows. Converts the aldose L-fucose into the corresponding ketose L-fuculose. The chain is L-fucose isomerase from Salmonella schwarzengrund (strain CVM19633).